Reading from the N-terminus, the 308-residue chain is MNSPNQNTRPIVIALGGNALLQRGQPPEAEIQKANIHIAALAIAKIARHYPVVVTHGNGPQVGLLALQGECEKSCKPYPLDVLGAETEGMIGYLLEQELRNQLPGRDVVTLLTQIVVDRQDPAFLQPTKPIGPVYTLEQAQQLAQERGWAIAADGQGYRRVVASPEPKRIIELPTIQLLVKSGALVVCAGGGGIPVVVNEAGGLQGVEAVIDKDLAAALLAQNLQAQGLLLLTDVDGVYENWSTNYAHCFEQTTPKNLRRYRFAAGSMGPKVEAACRFVETTGQWCGIGKLDQALDIIDGKAGTVVMP.

It belongs to the carbamate kinase family.

The protein resides in the cytoplasm. It catalyses the reaction hydrogencarbonate + NH4(+) + ATP = carbamoyl phosphate + ADP + H2O + H(+). The chain is Carbamate kinase from Synechocystis sp. (strain ATCC 27184 / PCC 6803 / Kazusa).